A 1060-amino-acid chain; its full sequence is DNA topoisomerase 1 (1060 aa).

A Toprim domain is found at 1-141 (MILVIAEKPN…KRMKFSALTK (141 aa)). Residues glutamate 7 and aspartate 107 each contribute to the Mg(2+) site. The Topo IA-type catalytic domain maps to 156 to 947 (NFGMANAGIA…EAKIRLTKIL (792 aa)). The interval 196 to 201 (STGRVQ) is interaction with DNA. A DOD-type homing endonuclease domain is found at 482–591 (LIGYLAGKGG…IKVYLQLLGI (110 aa)). Tyrosine 690 acts as the O-(5'-phospho-DNA)-tyrosine intermediate in catalysis. Residues 978–1006 (CPKCGGDLIVKYNEKTGKRFVGCSNWPKC) form a C4-type 1 zinc finger. A C4-type 2; atypical zinc finger spans residues 1025–1050 (CCNGAPVVIIREKDGREWEICLDMNC).

Belongs to the type IA topoisomerase family. As to quaternary structure, monomer. Requires Mg(2+) as cofactor. Post-translationally, this protein undergoes a protein self splicing that involves a post-translational excision of the intervening region (intein) followed by peptide ligation.

It catalyses the reaction ATP-independent breakage of single-stranded DNA, followed by passage and rejoining.. In terms of biological role, releases the supercoiling and torsional tension of DNA, which is introduced during the DNA replication and transcription, by transiently cleaving and rejoining one strand of the DNA duplex. Introduces a single-strand break via transesterification at a target site in duplex DNA. The scissile phosphodiester is attacked by the catalytic tyrosine of the enzyme, resulting in the formation of a DNA-(5'-phosphotyrosyl)-enzyme intermediate and the expulsion of a 3'-OH DNA strand. The free DNA strand then undergoes passage around the unbroken strand, thus removing DNA supercoils. Finally, in the religation step, the DNA 3'-OH attacks the covalent intermediate to expel the active-site tyrosine and restore the DNA phosphodiester backbone. In Pyrococcus furiosus (strain ATCC 43587 / DSM 3638 / JCM 8422 / Vc1), this protein is DNA topoisomerase 1 (topA).